Here is a 352-residue protein sequence, read N- to C-terminus: MNILGIETSCDETSAAVLKNGLVASNIISSQLCHSEFGGVVPELASREHDRMVVTVVEAALNAANIKKTELDFIAATAGPGLIGAVLVGLSFGQALGFSLGKPFIPINHIDAHIFSSFINDGTQHTFPAFPFVSLTVSGGHTMLCLVHDDLRIEPLGSTIDDAAGEAFDKTGKMLGLNYPAGPVIDKLAQTGDPNFHQFPQALTAQSKTGNDYKANLDFSFSGLKTSVLRYLSGQKPEFIQAHLNDICASIQEAITSVLVRKTILAAEQSGVRTISVTGGVSANSELRRKFEAASKAHGFSLHIPKPVYSTDNAAMIATLAHLKAERGLIEPCAYNAPAFAGYEKMKVFRAR.

2 residues coordinate Fe cation: His109 and His113. Residues 136 to 140 (TVSGG), Asp169, Gly182, Asp186, and Asn284 each bind substrate. Residue Asp312 coordinates Fe cation.

This sequence belongs to the KAE1 / TsaD family. It depends on Fe(2+) as a cofactor.

Its subcellular location is the cytoplasm. The catalysed reaction is L-threonylcarbamoyladenylate + adenosine(37) in tRNA = N(6)-L-threonylcarbamoyladenosine(37) in tRNA + AMP + H(+). Required for the formation of a threonylcarbamoyl group on adenosine at position 37 (t(6)A37) in tRNAs that read codons beginning with adenine. Is involved in the transfer of the threonylcarbamoyl moiety of threonylcarbamoyl-AMP (TC-AMP) to the N6 group of A37, together with TsaE and TsaB. TsaD likely plays a direct catalytic role in this reaction. The polypeptide is tRNA N6-adenosine threonylcarbamoyltransferase (Chloroherpeton thalassium (strain ATCC 35110 / GB-78)).